The sequence spans 283 residues: 4-diphosphocytidyl-2-C-methyl-D-erythritol kinase (283 aa).

Lysine 10 is an active-site residue. 99 to 109 (PMGGGLGGGSS) provides a ligand contact to ATP. Residue aspartate 141 is part of the active site.

It belongs to the GHMP kinase family. IspE subfamily. Homodimer.

It carries out the reaction 4-CDP-2-C-methyl-D-erythritol + ATP = 4-CDP-2-C-methyl-D-erythritol 2-phosphate + ADP + H(+). The protein operates within isoprenoid biosynthesis; isopentenyl diphosphate biosynthesis via DXP pathway; isopentenyl diphosphate from 1-deoxy-D-xylulose 5-phosphate: step 3/6. Functionally, catalyzes the phosphorylation of the position 2 hydroxy group of 4-diphosphocytidyl-2C-methyl-D-erythritol. This chain is 4-diphosphocytidyl-2-C-methyl-D-erythritol kinase, found in Escherichia coli (strain 55989 / EAEC).